Consider the following 689-residue polypeptide: Protein asunder (689 aa).

A coiled-coil region spans residues 521–550 (NGARLKLSKAKDQYRLLYRELEQLIQLNAT). Disordered stretches follow at residues 592–619 (PERL…SKRR) and 665–689 (GTKD…SVRS). Low complexity predominate over residues 599 to 614 (SSVGASGSSSSNSLLK). The short motif at 613-619 (LKASKRR) is the Nuclear localization signal (NLS) element.

The protein belongs to the Integrator subunit 13 family. Belongs to the multiprotein complex Integrator, at least composed of IntS1, IntS2, IntS3, IntS4, omd/IntS5, IntS6, defl/IntS7, IntS8, IntS9, IntS10, IntS11, IntS12, asun/IntS13, IntS14 and IntS15. The core complex associates with protein phosphatase 2A subunits mts/PP2A and Pp2A-29B, to form the Integrator-PP2A (INTAC) complex. Phosphorylated. Expressed in nurse cells at stages 9-10 of oogenesis and exported to the oocyte. Also expressed in the follicle cells surrounding the oocyte.

The protein localises to the nucleus. The protein resides in the cytoplasm. It localises to the perinuclear region. In terms of biological role, component of the integrator complex, a multiprotein complex that terminates RNA polymerase II (Pol II) transcription in the promoter-proximal region of genes. The integrator complex provides a quality checkpoint during transcription elongation by driving premature transcription termination of transcripts that are unfavorably configured for transcriptional elongation: the complex terminates transcription by (1) catalyzing dephosphorylation of the C-terminal domain (CTD) of Pol II subunit Polr2A/Rbp1 and Spt5, and (2) degrading the exiting nascent RNA transcript via endonuclease activity. The integrator complex is also involved in the 3'-end processing of the U7 snRNA, and also the spliceosomal snRNAs U1, U2, U4 and U5. Plays a role as a regulator of spermatogenesis. Crucial regulator of the mitotic cell cycle and development. Required for the correct dynein-dynactin perinuclear localization important for nucleus-centrosome coupling that occur upon meiotic progression of primary spermatocytes. Plays a role in sperm motility and fertility. May have a role in the PNG/PLU/GNU pathway. In Drosophila melanogaster (Fruit fly), this protein is Protein asunder.